Reading from the N-terminus, the 401-residue chain is Phosphoglycerate kinase (401 aa).

Substrate contacts are provided by residues 23–25 (DFN), Arg-39, 62–65 (HLGR), Arg-121, and Arg-154. ATP-binding positions include Lys-207, Gly-298, Glu-329, and 355–358 (GGDT).

The protein belongs to the phosphoglycerate kinase family. Monomer.

It localises to the cytoplasm. It carries out the reaction (2R)-3-phosphoglycerate + ATP = (2R)-3-phospho-glyceroyl phosphate + ADP. The protein operates within carbohydrate degradation; glycolysis; pyruvate from D-glyceraldehyde 3-phosphate: step 2/5. The sequence is that of Phosphoglycerate kinase from Campylobacter fetus subsp. fetus (strain 82-40).